Here is a 349-residue protein sequence, read N- to C-terminus: Phenylalanine--tRNA ligase alpha subunit (349 aa).

Position 258 (Glu-258) interacts with Mg(2+).

It belongs to the class-II aminoacyl-tRNA synthetase family. Phe-tRNA synthetase alpha subunit type 1 subfamily. Tetramer of two alpha and two beta subunits. Requires Mg(2+) as cofactor.

The protein localises to the cytoplasm. It catalyses the reaction tRNA(Phe) + L-phenylalanine + ATP = L-phenylalanyl-tRNA(Phe) + AMP + diphosphate + H(+). This Rickettsia conorii (strain ATCC VR-613 / Malish 7) protein is Phenylalanine--tRNA ligase alpha subunit.